A 951-amino-acid polypeptide reads, in one-letter code: Bifunctional glutamine synthetase adenylyltransferase/adenylyl-removing enzyme (951 aa).

Residues 1–440 (MLPLPSELQI…VFDDLIGDET (440 aa)) are adenylyl removase. The segment at 449–951 (HGLYKSLWQD…WLAANDANVS (503 aa)) is adenylyl transferase.

It belongs to the GlnE family. It depends on Mg(2+) as a cofactor.

The catalysed reaction is [glutamine synthetase]-O(4)-(5'-adenylyl)-L-tyrosine + phosphate = [glutamine synthetase]-L-tyrosine + ADP. It carries out the reaction [glutamine synthetase]-L-tyrosine + ATP = [glutamine synthetase]-O(4)-(5'-adenylyl)-L-tyrosine + diphosphate. Its function is as follows. Involved in the regulation of glutamine synthetase GlnA, a key enzyme in the process to assimilate ammonia. When cellular nitrogen levels are high, the C-terminal adenylyl transferase (AT) inactivates GlnA by covalent transfer of an adenylyl group from ATP to specific tyrosine residue of GlnA, thus reducing its activity. Conversely, when nitrogen levels are low, the N-terminal adenylyl removase (AR) activates GlnA by removing the adenylyl group by phosphorolysis, increasing its activity. The regulatory region of GlnE binds the signal transduction protein PII (GlnB) which indicates the nitrogen status of the cell. The chain is Bifunctional glutamine synthetase adenylyltransferase/adenylyl-removing enzyme from Yersinia pseudotuberculosis serotype O:1b (strain IP 31758).